The primary structure comprises 130 residues: MSGRGKQGGKARAKAKSRSSRAGLQFPVGRVHRLLRKGNYAERVGAGAPVYLAAVLEYLTAEILELAGNAARDNKKTRIIPRHLQLAIRNDEELNKLLGRVTIAQGGVLPNIQAVLLPKKTESHHKAKGK.

The disordered stretch occupies residues 1-22 (MSGRGKQGGKARAKAKSRSSRA). N-acetylserine is present on Ser2. Ser2 is modified (phosphoserine; by RPS6KA5). Arg4 is subject to Citrulline; alternate. Symmetric dimethylarginine; by PRMT5; alternate is present on Arg4. Residues Lys6 and Lys10 each carry the N6-(2-hydroxyisobutyryl)lysine; alternate modification. An N6-acetyllysine; alternate modification is found at Lys6. A compositionally biased stretch (basic residues) spans 7–19 (QGGKARAKAKSRS). Lys10 and Lys14 each carry N6-(beta-hydroxybutyryl)lysine; alternate. At Lys10 the chain carries N6-lactoyllysine; alternate. Position 10 is an N6-succinyllysine; alternate (Lys10). Lys14 is covalently cross-linked (Glycyl lysine isopeptide (Lys-Gly) (interchain with G-Cter in ubiquitin); alternate). Lys16 is covalently cross-linked (Glycyl lysine isopeptide (Lys-Gly) (interchain with G-Cter in ubiquitin)). Lys37 bears the N6-(2-hydroxyisobutyryl)lysine; alternate mark. Lys37 is modified (N6-(beta-hydroxybutyryl)lysine; alternate). Residue Lys37 is modified to N6-crotonyllysine; alternate. Lys75 and Lys76 each carry N6-(2-hydroxyisobutyryl)lysine. N6-(2-hydroxyisobutyryl)lysine; alternate is present on Lys96. Position 96 is an N6-(beta-hydroxybutyryl)lysine; alternate (Lys96). N6-succinyllysine; alternate is present on Lys96. Residue Lys96 is modified to N6-glutaryllysine; alternate. Gln105 bears the N5-methylglutamine mark. At Lys119 the chain carries N6-(2-hydroxyisobutyryl)lysine; alternate. N6-(beta-hydroxybutyryl)lysine; alternate is present on Lys119. Lys119 and Lys120 each carry N6-crotonyllysine; alternate. An N6-glutaryllysine; alternate mark is found at Lys119 and Lys120. Lys120 participates in a covalent cross-link: Glycyl lysine isopeptide (Lys-Gly) (interchain with G-Cter in ubiquitin); alternate. At Thr121 the chain carries Phosphothreonine; by DCAF1. The residue at position 126 (Lys126) is an N6-crotonyllysine; alternate. An N6-glutaryllysine; alternate modification is found at Lys126.

It belongs to the histone H2A family. As to quaternary structure, the nucleosome is a histone octamer containing two molecules each of H2A, H2B, H3 and H4 assembled in one H3-H4 heterotetramer and two H2A-H2B heterodimers. The octamer wraps approximately 147 bp of DNA. Post-translationally, deiminated on Arg-4 in granulocytes upon calcium entry. Monoubiquitination of Lys-120 (H2AK119Ub) by RING1, TRIM37 and RNF2/RING2 complex gives a specific tag for epigenetic transcriptional repression and participates in X chromosome inactivation of female mammals. It is involved in the initiation of both imprinted and random X inactivation. Ubiquitinated H2A is enriched in inactive X chromosome chromatin. Ubiquitination of H2A functions downstream of methylation of 'Lys-27' of histone H3 (H3K27me). H2AK119Ub by RNF2/RING2 can also be induced by ultraviolet and may be involved in DNA repair. Monoubiquitination of Lys-120 (H2AK119Ub) by TRIM37 may promote transformation of cells in a number of breast cancers. Following DNA double-strand breaks (DSBs), it is ubiquitinated through 'Lys-63' linkage of ubiquitin moieties by the E2 ligase UBE2N and the E3 ligases RNF8 and RNF168, leading to the recruitment of repair proteins to sites of DNA damage. Ubiquitination at Lys-14 and Lys-16 (H2AK13Ub and H2AK15Ub, respectively) in response to DNA damage is initiated by RNF168 that mediates monoubiquitination at these 2 sites, and 'Lys-63'-linked ubiquitin are then conjugated to monoubiquitin; RNF8 is able to extend 'Lys-63'-linked ubiquitin chains in vitro. Deubiquitinated by USP51 at Lys-14 and Lys-16 (H2AK13Ub and H2AK15Ub, respectively) after damaged DNA is repaired. H2AK119Ub and ionizing radiation-induced 'Lys-63'-linked ubiquitination (H2AK13Ub and H2AK15Ub) are distinct events. In terms of processing, phosphorylation on Ser-2 (H2AS1ph) is enhanced during mitosis. Phosphorylation on Ser-2 by RPS6KA5/MSK1 directly represses transcription. Acetylation of H3 inhibits Ser-2 phosphorylation by RPS6KA5/MSK1. Phosphorylation at Thr-121 (H2AT120ph) by DCAF1 is present in the regulatory region of many tumor suppresor genes and down-regulates their transcription. Post-translationally, glutamine methylation at Gln-105 (H2AQ104me) by FBL is specifically dedicated to polymerase I. It is present at 35S ribosomal DNA locus and impairs binding of the FACT complex. Symmetric dimethylation on Arg-4 by the PRDM1/PRMT5 complex may play a crucial role in the germ-cell lineage. In terms of processing, crotonylation (Kcr) is specifically present in male germ cells and marks testis-specific genes in post-meiotic cells, including X-linked genes that escape sex chromosome inactivation in haploid cells. Crotonylation marks active promoters and enhancers and confers resistance to transcriptional repressors. It is also associated with post-meiotically activated genes on autosomes. Post-translationally, lactylated in macrophages by EP300/P300 by using lactoyl-CoA directly derived from endogenous or exogenous lactate, leading to stimulates gene transcription.

The protein localises to the nucleus. Its subcellular location is the chromosome. Core component of nucleosome. Nucleosomes wrap and compact DNA into chromatin, limiting DNA accessibility to the cellular machineries which require DNA as a template. Histones thereby play a central role in transcription regulation, DNA repair, DNA replication and chromosomal stability. DNA accessibility is regulated via a complex set of post-translational modifications of histones, also called histone code, and nucleosome remodeling. The polypeptide is Histone H2A type 1-C (Homo sapiens (Human)).